We begin with the raw amino-acid sequence, 3084 residues long: Highly reducing polyketide synthase sdnO (3084 aa).

Residues 4–430 form the Ketosynthase family 3 (KS3) domain; sequence PIPLAVVGIA…GTNAHAVLEK (427 aa). Catalysis depends on for beta-ketoacyl synthase activity residues Cys178, His313, and His353. The tract at residues 541–841 is malonyl-CoA:ACP transacylase (MAT) domain; it reads FIFTGQGAQW…LAGPLRQSVA (301 aa). Ser632 (for malonyltransferase activity) is an active-site residue. Residues 931 to 1071 are N-terminal hotdog fold; that stretch reads HDLLGLRMTD…GSVLIDLVSS (141 aa). Positions 931-1243 are dehydratase (DH) domain; it reads HDLLGLRMTD…RSAEADMLVF (313 aa). The PKS/mFAS DH domain occupies 931 to 1275; that stretch reads HDLLGLRMTD…LRSLAALDGA (345 aa). Catalysis depends on His963, which acts as the Proton acceptor; for dehydratase activity. A C-terminal hotdog fold region spans residues 1099-1275; that stretch reads LQPGEDIPPS…LRSLAALDGA (177 aa). Catalysis depends on Asp1177, which acts as the Proton donor; for dehydratase activity. The interval 1733 to 2045 is enoylreductase (ER) domain; sequence GTAHAATFVE…RHENMTKYVV (313 aa). Positions 2069–2252 are catalytic ketoreductase (KRc) domain; sequence ATYVVAGGLG…YMALNIGLIE (184 aa). A Carrier domain is found at 2363-2440; the sequence is DIEAFAARAI…ALARKVTLRS (78 aa). Residue Ser2400 is modified to O-(pantetheine 4'-phosphoryl)serine. A disordered region spans residues 2445–2501; sequence GGAGGDASSTGNSESMARTPSDSSTVPTSIPATPSRSPSREPPAKETLTKSQQHLPI. Positions 2456 to 2481 are enriched in polar residues; the sequence is NSESMARTPSDSSTVPTSIPATPSRS. Residues 2482–2492 are compositionally biased toward basic and acidic residues; that stretch reads PSREPPAKETL. The choline/carnitine acyltransferase domain stretch occupies residues 2864–3084; the sequence is HFYSQLNRAF…LGVVRRVVEG (221 aa).

It functions in the pathway antibiotic biosynthesis. Highly reducing polyketide synthase; part of the gene cluster that mediates the biosynthesis of sordarin and hypoxysordarin, glycoside antibiotics with a unique tetracyclic diterpene aglycone structure. First, the geranylgeranyl diphosphate synthase sdnC constructs GGDP from farnesyl diphosphate and isopentenyl diphosphate. The diterpene cyclase sdnA then catalyzes the cyclization of GGDP to afford cycloaraneosene. Cycloaraneosene is then hydroxylated four times by the putative cytochrome P450 monooxygenases sdnB, sdnE, sdnF and sdnH to give a hydroxylated cycloaraneosene derivative such as cycloaraneosene-8,9,13,19-tetraol. Although the order of the hydroxylations is unclear, at least C8, C9 and C13 of the cycloaraneosene skeleton are hydroxylated before the sordaricin formation. Dehydration of the 13-hydroxy group of the hydroxylated cycloaraneosene derivative might be catalyzed by an unassigned hypothetical protein such as sdnG and sdnP to construct the cyclopentadiene moiety. The FAD-dependent oxidoreductase sdnN is proposed to catalyze the oxidation at C9 of the hydroxylated cycloaraneosene derivative and also catalyze the Baeyer-Villiger oxidation to give the lactone intermediate. The presumed lactone intermediate would be hydrolyzed to give an acrolein moiety and a carboxylate moiety. Then, [4+2]cycloaddition would occur between the acrolein moiety and the cyclopentadiene moiety to give sordaricin. SdnN might also be involved in the [4+2]cycloaddition after the hypothesized oxidation to accommodate the oxidized product and prompt the [4+2]cycloaddition. GDP-6-deoxy-D-altrose may be biosynthesized from GDP-D-mannose by the putative GDP-mannose-4,6-dehydratase sdnI and the short-chain dehydrogenase sdnK. The glycosyltransferase sdnJ catalyzes the attachment of 6-deoxy-D-altrose onto the 19-hydroxy group of sordaricin to give 4'-O-demethylsordarin. The methyltransferase sdnD would complete the biosynthesis of sordarin. Sordarin can be further modified into hypoxysordarin. The unique acyl chain at the 3'-hydroxy group of hypoxysordarin would be constructed by an iterative type I PKS sdnO and the trans-acting polyketide methyltransferase sdnL. SdnL would be responsible for the introduction of an alpha-methyl group of the polyketide chain. Alternatively, the putative beta-lactamase-like sdnR might be responsible for the cleavage and transfer of the polyketide chain from the PKS sdnO to sordarin. Two putative cytochrome P450 monooxygenases, sdnQ and sdnT, might catalyze the epoxidations of the polyketide chain to complete the biosynthesis of hypoxysordarin. Transcriptional regulators sdnM and sdnS are presumably encoded for the transcriptional regulation of the expression of the sdn gene cluster. In Sordaria araneosa (Pleurage araneosa), this protein is Highly reducing polyketide synthase sdnO.